The sequence spans 255 residues: Electron transfer flavoprotein subunit beta (255 aa).

A2 is subject to N-acetylalanine. Residues A9, 39-42 (NPFC), C66, and 123-134 (GKQAIDDDCNQT) contribute to the AMP site. The segment at 183–205 (ADLRLNEPRYATLPNIMKAKKKK) is recognition loop. An N6,N6,N6-trimethyllysine; by ETFBKMT; alternate modification is found at K200. The residue at position 200 (K200) is an N6-acetyllysine; alternate. At K200 the chain carries N6-methyllysine; alternate. At K203 the chain carries N6,N6,N6-trimethyllysine; by ETFBKMT. K210 carries the post-translational modification N6-acetyllysine; alternate. An N6-succinyllysine; alternate modification is found at K210. S223 and S226 each carry phosphoserine. K238 carries the N6-acetyllysine modification. An N6-acetyllysine; alternate modification is found at K248. K248 is modified (N6-succinyllysine; alternate).

The protein belongs to the ETF beta-subunit/FixA family. As to quaternary structure, heterodimer composed of ETFA and ETFB. Identified in a complex that contains ETFA, ETFB and ETFRF1. Interacts with ACADM. Methylated. Trimethylation at Lys-200 and Lys-203 may negatively regulate the activity in electron transfer from acyl-CoA dehydrogenases.

The protein localises to the mitochondrion matrix. Heterodimeric electron transfer flavoprotein that accepts electrons from several mitochondrial dehydrogenases, including acyl-CoA dehydrogenases, glutaryl-CoA and sarcosine dehydrogenase. It transfers the electrons to the main mitochondrial respiratory chain via ETF-ubiquinone oxidoreductase. Required for normal mitochondrial fatty acid oxidation and normal amino acid metabolism. ETFB binds an AMP molecule that probably has a purely structural role. The sequence is that of Electron transfer flavoprotein subunit beta from Pongo abelii (Sumatran orangutan).